The following is a 338-amino-acid chain: Aspartate carbamoyltransferase catalytic subunit (338 aa).

Residues arginine 72 and threonine 73 each contribute to the carbamoyl phosphate site. Residue lysine 100 coordinates L-aspartate. Arginine 122, histidine 152, and glutamine 155 together coordinate carbamoyl phosphate. L-aspartate contacts are provided by arginine 186 and arginine 243. Carbamoyl phosphate is bound by residues glycine 284 and proline 285.

This sequence belongs to the aspartate/ornithine carbamoyltransferase superfamily. ATCase family. As to quaternary structure, heterododecamer (2C3:3R2) of six catalytic PyrB chains organized as two trimers (C3), and six regulatory PyrI chains organized as three dimers (R2).

The catalysed reaction is carbamoyl phosphate + L-aspartate = N-carbamoyl-L-aspartate + phosphate + H(+). The protein operates within pyrimidine metabolism; UMP biosynthesis via de novo pathway; (S)-dihydroorotate from bicarbonate: step 2/3. Its function is as follows. Catalyzes the condensation of carbamoyl phosphate and aspartate to form carbamoyl aspartate and inorganic phosphate, the committed step in the de novo pyrimidine nucleotide biosynthesis pathway. This is Aspartate carbamoyltransferase catalytic subunit from Acinetobacter baylyi (strain ATCC 33305 / BD413 / ADP1).